Reading from the N-terminus, the 392-residue chain is Galactose-1-phosphate uridylyltransferase (392 aa).

Zn(2+) contacts are provided by Cys-52 and Cys-55. Residues Ala-61 and 77-78 (ND) contribute to the UDP-alpha-D-glucose site. Zn(2+) is bound at residue His-126. Residue Asn-194 participates in UDP-alpha-D-glucose binding. His-205 contacts Zn(2+). His-207 functions as the Tele-UMP-histidine intermediate in the catalytic mechanism. Gln-209 lines the UDP-alpha-D-glucose pocket. Fe cation contacts are provided by Glu-223, His-323, His-340, and His-342. UDP-alpha-D-glucose is bound by residues 355–358 (KFLV) and 360–361 (YE).

It belongs to the galactose-1-phosphate uridylyltransferase type 1 family. Homodimer. Zn(2+) serves as cofactor.

It carries out the reaction alpha-D-galactose 1-phosphate + UDP-alpha-D-glucose = alpha-D-glucose 1-phosphate + UDP-alpha-D-galactose. The protein operates within carbohydrate metabolism; galactose metabolism. The sequence is that of Galactose-1-phosphate uridylyltransferase (gal-7) from Neurospora crassa (strain ATCC 24698 / 74-OR23-1A / CBS 708.71 / DSM 1257 / FGSC 987).